The chain runs to 163 residues: Putative 4-hydroxy-4-methyl-2-oxoglutarate aldolase (163 aa).

Substrate-binding positions include 76–79 (GDML) and R98. D99 lines the a divalent metal cation pocket.

Belongs to the class II aldolase/RraA-like family. As to quaternary structure, homotrimer. A divalent metal cation serves as cofactor.

It catalyses the reaction 4-hydroxy-4-methyl-2-oxoglutarate = 2 pyruvate. The catalysed reaction is oxaloacetate + H(+) = pyruvate + CO2. Functionally, catalyzes the aldol cleavage of 4-hydroxy-4-methyl-2-oxoglutarate (HMG) into 2 molecules of pyruvate. Also contains a secondary oxaloacetate (OAA) decarboxylase activity due to the common pyruvate enolate transition state formed following C-C bond cleavage in the retro-aldol and decarboxylation reactions. This is Putative 4-hydroxy-4-methyl-2-oxoglutarate aldolase from Pseudomonas fluorescens (strain ATCC BAA-477 / NRRL B-23932 / Pf-5).